Here is a 568-residue protein sequence, read N- to C-terminus: Delta 8-(E)-sphingolipid desaturase (568 aa).

Residues 2–77 form the Cytochrome b5 heme-binding domain; the sequence is DNIISRGEIE…FRKWRIGRID (76 aa). Heme-binding residues include His37 and His60. 2 consecutive transmembrane segments (helical) span residues 241 to 261 and 272 to 292; these read FWSAFSMGCAWQQLVFIAHDA and LDNIFGMIIASWVGGLSLGWW. Residues 259-263 carry the Histidine box-1 motif; sequence HDAGH. Residues 296–300 carry the Histidine box-2 motif; it reads HNVHH. A run of 3 helical transmembrane segments spans residues 352 to 377, 389 to 409, and 421 to 441; these read YLYYPMLAFGRFNLYRLSWMHVLLGL, YFELCGLIFFNYWFFYLLVGC, and IMVSHITTMLVHVQITLSHFA. Residues 480–484 carry the Histidine box-3 motif; the sequence is QVVHH. The span at 549-560 shows a compositional bias: basic and acidic residues; that stretch reads ATGEREADEKTY. Positions 549-568 are disordered; sequence ATGEREADEKTYRTKSIKNA.

The protein belongs to the fatty acid desaturase type 1 family.

Its subcellular location is the membrane. The enzyme catalyses an N-acylsphing-4-enine + 2 Fe(II)-[cytochrome b5] + O2 + 2 H(+) = a (4E,8E)-4-sphinga-4,8-dienine ceramide + 2 Fe(III)-[cytochrome b5] + 2 H2O. It functions in the pathway lipid metabolism; sphingolipid metabolism. Functionally, delta(8)-fatty-acid desaturase which introduces a double bond at the 8-position in the long-chain base (LCB) of ceramides. Required for the formation of the di-unsaturated sphingoid base (E,E)-sphinga-4,8-dienine during glucosylceramide (GluCer) biosynthesis. This chain is Delta 8-(E)-sphingolipid desaturase, found in Lachancea kluyveri (strain ATCC 58438 / CBS 3082 / BCRC 21498 / NBRC 1685 / JCM 7257 / NCYC 543 / NRRL Y-12651) (Yeast).